Consider the following 358-residue polypeptide: UPF0575 protein C19orf67 (358 aa).

Residues 1-84 (MATEQWFEGS…PGPAPPRLSL (84 aa)) are disordered. 2 stretches are compositionally biased toward pro residues: residues 17–32 (ETPP…PPCG) and 70–80 (PLVPRPGPAPP).

The protein belongs to the UPF0575 family.

The polypeptide is UPF0575 protein C19orf67 (C19orf67) (Homo sapiens (Human)).